Here is a 333-residue protein sequence, read N- to C-terminus: Biotin synthase (333 aa).

The Radical SAM core domain maps to 47–276; that stretch reads YYGKKVKLNM…TKEIRISGGR (230 aa). Cys-65, Cys-69, and Cys-72 together coordinate [4Fe-4S] cluster. [2Fe-2S] cluster is bound by residues Cys-109, Cys-141, Cys-201, and Arg-271.

It belongs to the radical SAM superfamily. Biotin synthase family. Homodimer. [4Fe-4S] cluster is required as a cofactor. The cofactor is [2Fe-2S] cluster.

It carries out the reaction (4R,5S)-dethiobiotin + (sulfur carrier)-SH + 2 reduced [2Fe-2S]-[ferredoxin] + 2 S-adenosyl-L-methionine = (sulfur carrier)-H + biotin + 2 5'-deoxyadenosine + 2 L-methionine + 2 oxidized [2Fe-2S]-[ferredoxin]. It participates in cofactor biosynthesis; biotin biosynthesis; biotin from 7,8-diaminononanoate: step 2/2. Its function is as follows. Catalyzes the conversion of dethiobiotin (DTB) to biotin by the insertion of a sulfur atom into dethiobiotin via a radical-based mechanism. In Bacillus licheniformis (strain ATCC 14580 / DSM 13 / JCM 2505 / CCUG 7422 / NBRC 12200 / NCIMB 9375 / NCTC 10341 / NRRL NRS-1264 / Gibson 46), this protein is Biotin synthase.